Here is a 286-residue protein sequence, read N- to C-terminus: Cytochrome bo(3) ubiquinol oxidase subunit 2 (286 aa).

The N-terminal stretch at 1 to 24 (MQFIKYKSYILKFLLVSCIFCING) is a signal peptide. The N-palmitoyl cysteine moiety is linked to residue C25. A lipid anchor (S-diacylglycerol cysteine) is attached at C25. At 25–44 (CDCTILCPNGLIAQEQRFVL) the chain is on the extracellular side. Residues 45 to 67 (FVSFFTMLLIIIPVIFMTIFFVL) traverse the membrane as a helical segment. Residues 68-85 (RYRESNFSKTYDPKWSHS) lie on the Cytoplasmic side of the membrane. A helical membrane pass occupies residues 86 to 108 (NIIELLIWGIPIIIIVFLSIFSW). The Extracellular segment spans residues 109–286 (KSVHDLDPKK…VIANVLKISL (178 aa)).

Belongs to the cytochrome c oxidase subunit 2 family. As to quaternary structure, heterooctamer of two A chains, two B chains, two C chains and two D chains.

It localises to the cell membrane. In terms of biological role, cytochrome bo(3) ubiquinol terminal oxidase is the component of the aerobic respiratory chain of E.coli that predominates when cells are grown at high aeration. Has proton pump activity across the membrane in addition to electron transfer, pumping 2 protons/electron. The polypeptide is Cytochrome bo(3) ubiquinol oxidase subunit 2 (cyoA) (Buchnera aphidicola subsp. Baizongia pistaciae (strain Bp)).